Here is a 377-residue protein sequence, read N- to C-terminus: Carbamoyl phosphate synthase small chain (377 aa).

The tract at residues 1–186 is CPSase; the sequence is MSTPALLVLA…LGKGFVTPDE (186 aa). L-glutamine-binding residues include S47, G238, and G240. A Glutamine amidotransferase type-1 domain is found at 190–377; that stretch reads HVVAYDFGVK…IGNMKAAKRA (188 aa). C266 serves as the catalytic Nucleophile. L-glutamine-binding residues include L267, Q270, N308, G310, and F311. Active-site residues include H350 and E352.

This sequence belongs to the CarA family. As to quaternary structure, composed of two chains; the small (or glutamine) chain promotes the hydrolysis of glutamine to ammonia, which is used by the large (or ammonia) chain to synthesize carbamoyl phosphate. Tetramer of heterodimers (alpha,beta)4.

It carries out the reaction hydrogencarbonate + L-glutamine + 2 ATP + H2O = carbamoyl phosphate + L-glutamate + 2 ADP + phosphate + 2 H(+). It catalyses the reaction L-glutamine + H2O = L-glutamate + NH4(+). Its pathway is amino-acid biosynthesis; L-arginine biosynthesis; carbamoyl phosphate from bicarbonate: step 1/1. The protein operates within pyrimidine metabolism; UMP biosynthesis via de novo pathway; (S)-dihydroorotate from bicarbonate: step 1/3. Functionally, small subunit of the glutamine-dependent carbamoyl phosphate synthetase (CPSase). CPSase catalyzes the formation of carbamoyl phosphate from the ammonia moiety of glutamine, carbonate, and phosphate donated by ATP, constituting the first step of 2 biosynthetic pathways, one leading to arginine and/or urea and the other to pyrimidine nucleotides. The small subunit (glutamine amidotransferase) binds and cleaves glutamine to supply the large subunit with the substrate ammonia. The protein is Carbamoyl phosphate synthase small chain of Neisseria meningitidis serogroup A / serotype 4A (strain DSM 15465 / Z2491).